The following is a 276-amino-acid chain: Protein PXR1 (276 aa).

Residues 1–23 are disordered; it reads MGLAGTKIKQRFGNDPRNTNWSN. The G-patch domain occupies 25–71; it reads TSRFGHQYLAKMGWQQGSGLGLVSHALTTHVKVSIKDDNLGLGAKLH. Over residues 152–172 the composition is skewed to basic and acidic residues; that stretch reads DDGKKSRKRKADESETKEDKK. The disordered stretch occupies residues 152-261; that stretch reads DDGKKSRKRK…SKWIKQKRAS (110 aa). A compositionally biased stretch (basic residues) spans 173–218; it reads TLKKHKKEKKDKKEKKEKKKKKEKKDKKDKKDKKNKKDKKDKKDKK. The span at 219-228 shows a compositional bias: basic and acidic residues; that stretch reads DKKDKIRTGS. The segment covering 229-239 has biased composition (polar residues); it reads DETLVSKESSA.

The protein belongs to the PINX1 family.

It is found in the nucleus. It localises to the nucleolus. Involved in rRNA-processing at A0, A1 and A2 sites and negatively regulates telomerase. The polypeptide is Protein PXR1 (PXR1) (Candida albicans (strain SC5314 / ATCC MYA-2876) (Yeast)).